A 175-amino-acid polypeptide reads, in one-letter code: Zinc finger A20 and AN1 domain-containing stress-associated protein 7 (175 aa).

Residues 13-47 (PTEPKLCDNGCGFFGSPSNMNLCSKCYRSLRAEED) form an A20-type zinc finger. The Zn(2+) site is built by cysteine 19, cysteine 23, cysteine 35, cysteine 38, cysteine 116, cysteine 119, cysteine 130, cysteine 132, cysteine 137, histidine 140, histidine 146, and cysteine 148. An AN1-type zinc finger spans residues 110-156 (VRPNNRCFSCNKKVGVMGFKCKCGSTFCGSHRYPEKHECSFDFKEVG).

Functionally, may be involved in environmental stress response. In Arabidopsis thaliana (Mouse-ear cress), this protein is Zinc finger A20 and AN1 domain-containing stress-associated protein 7 (SAP7).